The sequence spans 281 residues: Bis(5'-nucleosyl)-tetraphosphatase, symmetrical (281 aa).

It belongs to the Ap4A hydrolase family.

The catalysed reaction is P(1),P(4)-bis(5'-adenosyl) tetraphosphate + H2O = 2 ADP + 2 H(+). In terms of biological role, hydrolyzes diadenosine 5',5'''-P1,P4-tetraphosphate to yield ADP. The protein is Bis(5'-nucleosyl)-tetraphosphatase, symmetrical of Acidovorax sp. (strain JS42).